The chain runs to 474 residues: Putative response regulator NtrX-like (474 aa).

A Response regulatory domain is found at 5 to 121; that stretch reads DVLIVDDEES…KLVILLTRAC (117 aa). 4-aspartylphosphate is present on Asp54. Residues 143–368 enclose the Sigma-54 factor interaction domain; it reads LVGECSVTLK…LRNVVEWTLI (226 aa). ATP-binding positions include 171 to 178 and 231 to 240; these read GKVGSGKE and ANNGTLYIDE.

Functionally, member of the two-component regulatory system RC0849/RC0948. The chain is Putative response regulator NtrX-like from Rickettsia conorii (strain ATCC VR-613 / Malish 7).